A 459-amino-acid chain; its full sequence is LAS seventeen-binding protein 3 (459 aa).

The segment at 219-403 (RPSNGGRGSF…APTSPSTSSP (185 aa)) is disordered. Ser227 carries the post-translational modification Phosphoserine. Acidic residues predominate over residues 229–242 (DDDEDDYYDDDDYY). The span at 243 to 262 (NDIPSSFSSTDASSTRPNTR) shows a compositional bias: low complexity. Residues 289–300 (YSRNSRLAPTNS) show a composition bias toward polar residues. Thr298 carries the post-translational modification Phosphothreonine. Ser300 and Ser303 each carry phosphoserine. The span at 340 to 350 (DEYDDYDDDYE) shows a compositional bias: acidic residues. Positions 351 to 371 (SGYRRGNGRDRTKDREVDDLS) are enriched in basic and acidic residues. A compositionally biased stretch (polar residues) spans 372 to 391 (NRFSKSRISSASTPQTSQGR). Thr393 is subject to Phosphothreonine. The span at 393–403 (TAPTSPSTSSP) shows a compositional bias: low complexity. A phosphoserine mark is found at Ser397, Ser402, and Ser416. Residues 400-459 (TSSPKAVALYSFAGEESGDLPFRKGDVITILKKSDSQNDWWTGRVNGREGIFPANYVELV) enclose the SH3 domain.

This sequence belongs to the SH3YL1 family. In terms of assembly, interacts with LAS17. In terms of processing, phosphorylation of Ser-397 is induced 2-fold in response to mating pheromone.

It localises to the cytoplasm. This Saccharomyces cerevisiae (strain YJM789) (Baker's yeast) protein is LAS seventeen-binding protein 3 (LSB3).